Here is a 483-residue protein sequence, read N- to C-terminus: Teichuronic acid biosynthesis protein TuaB (483 aa).

Helical transmembrane passes span 15 to 34 (TSISTMCITIIQIVQFALLG), 41 to 63 (EFGLVGMITTVTVFAQIVLDMGF), 83 to 105 (WLNIMTGVLLFVLLYVSSPVIAG), 112 to 134 (LVFLVRILAIMFLIAPIGQQYQY), 154 to 176 (VLSFGYLAIAVFMMDAILAYVIS), 294 to 316 (LALVSFPLLIGLVSVSDAFITAV), 321 to 343 (WLAAVPILNVLAIVGILRVLMNP), 356 to 378 (LAFYWDSGVLLLYGLSLFAAVQT), 382 to 404 (LTVAWVYAIISVVNFLIGRWLLA), 411 to 433 (LSAYFQSIMKPFLITAAMGIIAF), and 448 to 470 (MRLAISVAAGALCYLFLLVKAYP).

Belongs to the polysaccharide synthase family.

Its subcellular location is the cell membrane. Its pathway is cell wall biogenesis; teichuronic acid biosynthesis. Its function is as follows. Might be involved in the translocation of teichuronic acid repeating units from the inner to the outer surface of the membrane. The protein is Teichuronic acid biosynthesis protein TuaB (tuaB) of Bacillus subtilis (strain 168).